Consider the following 223-residue polypeptide: Ethylene-inducing xylanase 1 (223 aa).

An N-terminal signal peptide occupies residues 1–19; sequence MVSFTSLLAAFSVVSGVLT. Residues 34-223 enclose the GH11 domain; sequence KRTPSSTGTS…SSGSATMTVS (190 aa). E119 functions as the Nucleophile in the catalytic mechanism. A nuclear localization signal region spans residues 174–184; sequence RRTKRTSGSVN. E210 serves as the catalytic Proton donor.

The protein belongs to the glycosyl hydrolase 11 (cellulase G) family.

The protein resides in the secreted. It localises to the host nucleus. It catalyses the reaction Endohydrolysis of (1-&gt;4)-beta-D-xylosidic linkages in xylans.. The protein operates within glycan degradation; xylan degradation. Its function is as follows. Endo-1,4-beta-xylanase involved in the hydrolysis of xylan, a major structural heterogeneous polysaccharide found in plant biomass representing the second most abundant polysaccharide in the biosphere, after cellulose. Acts as an effector that localizes to the host nucleus to contribute to the virulence process. Induces host innate immunity responses; triggers BAK1-and SOBIR1-dependent cell death, salicylic acid signaling and jasmonic acid signaling. Does not exhibit any cell death when transiently expressed in N.benthamiana. The protein is Ethylene-inducing xylanase 1 of Verticillium dahliae (strain VdLs.17 / ATCC MYA-4575 / FGSC 10137) (Verticillium wilt).